The following is a 190-amino-acid chain: MNNNLQRDAIAAAIDVLNEERVIAYPTEAVFGVGCDPDSETAVMRLLELKQRPVDKGLILIAANYEQLKPYIDDTMLTDVQRETIFSRWPGPVTFVFPAPATTPRWLTGRFDSLAVRVTDHPLVVALCQAYGKPLVSTSANLSGLPPCRTVDEVRAQFGAAFPVVPGETGGRLNPSEIRDALTGELFRQG.

Residues 7–190 enclose the YrdC-like domain; that stretch reads RDAIAAAIDV…ALTGELFRQG (184 aa).

Belongs to the SUA5 family. TsaC subfamily.

The protein resides in the cytoplasm. The enzyme catalyses L-threonine + hydrogencarbonate + ATP = L-threonylcarbamoyladenylate + diphosphate + H2O. Its function is as follows. Required for the formation of a threonylcarbamoyl group on adenosine at position 37 (t(6)A37) in tRNAs that read codons beginning with adenine. Catalyzes the conversion of L-threonine, HCO(3)(-)/CO(2) and ATP to give threonylcarbamoyl-AMP (TC-AMP) as the acyladenylate intermediate, with the release of diphosphate. The protein is Threonylcarbamoyl-AMP synthase of Escherichia coli O9:H4 (strain HS).